The chain runs to 482 residues: tRNA sulfurtransferase (482 aa).

The THUMP domain occupies 61–165 (LAIRDALTRI…DDRLLLIKGR (105 aa)). ATP contacts are provided by residues 183–184 (LI), lysine 265, glycine 287, and glutamine 296. A disulfide bridge connects residues cysteine 344 and cysteine 456. The Rhodanese domain maps to 404 to 482 (FGPNDVILDI…GFNNVKVYRP (79 aa)). Cysteine 456 acts as the Cysteine persulfide intermediate in catalysis.

The protein belongs to the ThiI family.

It localises to the cytoplasm. It catalyses the reaction [ThiI sulfur-carrier protein]-S-sulfanyl-L-cysteine + a uridine in tRNA + 2 reduced [2Fe-2S]-[ferredoxin] + ATP + H(+) = [ThiI sulfur-carrier protein]-L-cysteine + a 4-thiouridine in tRNA + 2 oxidized [2Fe-2S]-[ferredoxin] + AMP + diphosphate. It carries out the reaction [ThiS sulfur-carrier protein]-C-terminal Gly-Gly-AMP + S-sulfanyl-L-cysteinyl-[cysteine desulfurase] + AH2 = [ThiS sulfur-carrier protein]-C-terminal-Gly-aminoethanethioate + L-cysteinyl-[cysteine desulfurase] + A + AMP + 2 H(+). The protein operates within cofactor biosynthesis; thiamine diphosphate biosynthesis. Its function is as follows. Catalyzes the ATP-dependent transfer of a sulfur to tRNA to produce 4-thiouridine in position 8 of tRNAs, which functions as a near-UV photosensor. Also catalyzes the transfer of sulfur to the sulfur carrier protein ThiS, forming ThiS-thiocarboxylate. This is a step in the synthesis of thiazole, in the thiamine biosynthesis pathway. The sulfur is donated as persulfide by IscS. In Escherichia coli O139:H28 (strain E24377A / ETEC), this protein is tRNA sulfurtransferase.